The sequence spans 365 residues: Alanine racemase (365 aa).

The active-site Proton acceptor; specific for D-alanine is the Lys-32. Lys-32 bears the N6-(pyridoxal phosphate)lysine mark. Arg-128 provides a ligand contact to substrate. Tyr-257 (proton acceptor; specific for L-alanine) is an active-site residue. Met-305 contacts substrate.

It belongs to the alanine racemase family. Pyridoxal 5'-phosphate serves as cofactor.

The enzyme catalyses L-alanine = D-alanine. Its pathway is amino-acid biosynthesis; D-alanine biosynthesis; D-alanine from L-alanine: step 1/1. In terms of biological role, catalyzes the interconversion of L-alanine and D-alanine. May also act on other amino acids. This is Alanine racemase (alr) from Francisella tularensis subsp. tularensis (strain WY96-3418).